We begin with the raw amino-acid sequence, 387 residues long: EARP-interacting protein homolog (387 aa).

4 WD repeats span residues 132–172 (TAHG…TKSV), 182–222 (KGQL…QIYC), 226–266 (AHGQ…EPVK), and 270–310 (EHSH…SEPF). The segment at 311–339 (GHLVDDEDLSDQEDNPQEEKTKEPLQDSI) is disordered. The span at 315 to 326 (DDEDLSDQEDNP) shows a compositional bias: acidic residues. The stretch at 345–385 (EHEDSVYAVEWSSADPWLFASLSYDGRLVINRVPRALKYNI) is one WD 5 repeat.

The protein belongs to the WD repeat EIPR1 family.

It is found in the golgi apparatus. Its subcellular location is the trans-Golgi network. In terms of biological role, may act as a component of endosomal retrieval machinery that is involved in protein transport from early endosomes to either recycling endosomes or the trans-Golgi network. This chain is EARP-interacting protein homolog, found in Xenopus laevis (African clawed frog).